A 436-amino-acid polypeptide reads, in one-letter code: GTPase Der (436 aa).

EngA-type G domains are found at residues 4–167 (PVVA…PKEE) and 176–351 (VKFS…DNHS). GTP is bound by residues 10 to 17 (GRPNVGKS), 57 to 61 (DTGGI), 119 to 122 (NKVD), 182 to 189 (GRPNVGKS), 229 to 233 (DTAGM), and 294 to 297 (NKWD). The region spanning 352–436 (LRVQSSMLND…PIRVIARKRK (85 aa)) is the KH-like domain.

This sequence belongs to the TRAFAC class TrmE-Era-EngA-EngB-Septin-like GTPase superfamily. EngA (Der) GTPase family. In terms of assembly, associates with the 50S ribosomal subunit.

Functionally, GTPase that plays an essential role in the late steps of ribosome biogenesis. The protein is GTPase Der of Listeria monocytogenes serotype 4b (strain F2365).